Reading from the N-terminus, the 495-residue chain is Glutamate--tRNA ligase (495 aa).

A 'HIGH' region motif is present at residues proline 12–asparagine 22. Positions lysine 259–arginine 263 match the 'KMSKS' region motif. Lysine 262 is an ATP binding site.

The protein belongs to the class-I aminoacyl-tRNA synthetase family. Glutamate--tRNA ligase type 1 subfamily. As to quaternary structure, monomer.

The protein resides in the cytoplasm. The enzyme catalyses tRNA(Glu) + L-glutamate + ATP = L-glutamyl-tRNA(Glu) + AMP + diphosphate. Functionally, catalyzes the attachment of glutamate to tRNA(Glu) in a two-step reaction: glutamate is first activated by ATP to form Glu-AMP and then transferred to the acceptor end of tRNA(Glu). The chain is Glutamate--tRNA ligase from Latilactobacillus sakei subsp. sakei (strain 23K) (Lactobacillus sakei subsp. sakei).